Reading from the N-terminus, the 146-residue chain is Hemoglobin subunit beta-1 (146 aa).

The Globin domain occupies 2 to 146 (HWTAEEKQLI…VAHALARRYH (145 aa)). Residues His63 and His92 each coordinate heme b.

This sequence belongs to the globin family. In terms of assembly, heterotetramer of two alpha chains and two beta chains. Red blood cells.

Functionally, involved in oxygen transport from the lung to the various peripheral tissues. The polypeptide is Hemoglobin subunit beta-1 (HBB1) (Iguana iguana (Common iguana)).